Consider the following 158-residue polypeptide: Large ribosomal subunit protein uL13 (158 aa).

Residues Pro-129–Arg-158 form a disordered region. Over residues Gly-144–Arg-158 the composition is skewed to low complexity.

Belongs to the universal ribosomal protein uL13 family. In terms of assembly, part of the 50S ribosomal subunit.

Its function is as follows. This protein is one of the early assembly proteins of the 50S ribosomal subunit, although it is not seen to bind rRNA by itself. It is important during the early stages of 50S assembly. This Anaplasma phagocytophilum (strain HZ) protein is Large ribosomal subunit protein uL13.